The following is a 683-amino-acid chain: Probable potassium transport system protein Kup 1 (683 aa).

12 helical membrane-spanning segments follow: residues G13–M33, I55–L75, W98–P118, V139–F159, I168–G188, A218–S238, S251–L271, L296–G316, I345–F365, G376–M396, T401–A421, and F426–V446.

Belongs to the HAK/KUP transporter (TC 2.A.72) family.

Its subcellular location is the cell membrane. It catalyses the reaction K(+)(in) + H(+)(in) = K(+)(out) + H(+)(out). Functionally, transport of potassium into the cell. Likely operates as a K(+):H(+) symporter. This is Probable potassium transport system protein Kup 1 from Lactobacillus johnsonii (strain CNCM I-12250 / La1 / NCC 533).